Here is a 258-residue protein sequence, read N- to C-terminus: MLTVISPAKRLDWAKRELATTAPDFMDDAVTLARAAKRLSQADLRKLMDISADLAKLNADRFKVFEEAPEGERPAALAFAGDTYIGLEATSLDADTMDYAQDHLRILSGLYGLLRPLDAIRPYRLEMGSRLKTRKGPSLYAYWGPRLAQALNVQAKAVDTKTLINCASVEYFSAVDEKALDLDIVTPQFFEDKPGGPKIVSFFAKKARGAMARFVQERRLTSPHQILDFDTGGYSHAPDLSAPGKPAFLRSEAAQKAA.

This sequence belongs to the UPF0246 family.

In Jannaschia sp. (strain CCS1), this protein is UPF0246 protein Jann_0444.